Here is a 247-residue protein sequence, read N- to C-terminus: 3-deoxy-manno-octulosonate cytidylyltransferase (247 aa).

This sequence belongs to the KdsB family.

It is found in the cytoplasm. It carries out the reaction 3-deoxy-alpha-D-manno-oct-2-ulosonate + CTP = CMP-3-deoxy-beta-D-manno-octulosonate + diphosphate. It participates in nucleotide-sugar biosynthesis; CMP-3-deoxy-D-manno-octulosonate biosynthesis; CMP-3-deoxy-D-manno-octulosonate from 3-deoxy-D-manno-octulosonate and CTP: step 1/1. The protein operates within bacterial outer membrane biogenesis; lipopolysaccharide biosynthesis. Functionally, activates KDO (a required 8-carbon sugar) for incorporation into bacterial lipopolysaccharide in Gram-negative bacteria. This is 3-deoxy-manno-octulosonate cytidylyltransferase from Chlorobium limicola (strain DSM 245 / NBRC 103803 / 6330).